We begin with the raw amino-acid sequence, 606 residues long: DNA mismatch repair protein MutL (606 aa).

Residues Met340–Pro366 form a disordered region. The segment covering Arg353–Pro366 has biased composition (low complexity).

The protein belongs to the DNA mismatch repair MutL/HexB family.

Functionally, this protein is involved in the repair of mismatches in DNA. It is required for dam-dependent methyl-directed DNA mismatch repair. May act as a 'molecular matchmaker', a protein that promotes the formation of a stable complex between two or more DNA-binding proteins in an ATP-dependent manner without itself being part of a final effector complex. The protein is DNA mismatch repair protein MutL of Agrobacterium fabrum (strain C58 / ATCC 33970) (Agrobacterium tumefaciens (strain C58)).